A 384-amino-acid polypeptide reads, in one-letter code: Probable 2-heptyl-3-hydroxy-4(1H)-quinolone synthase AqdB2 (384 aa).

It belongs to the 3-hydroxybenzoate 6-hydroxylase family.

It carries out the reaction 2-heptyl-4(1H)-quinolone + NADH + O2 + H(+) = 2-heptyl-3-hydroxy-4(1H)-quinolone + NAD(+) + H2O. Functionally, involved in the degradation of the Pseudomonas aeruginosa quorum sensing signal molecule HHQ (2-heptyl-4-quinolone) to anthranilic acid. Probably catalyzes the hydroxylation of HHQ to PQS (2-heptyl-3-hydroxy-4-quinolone). The sequence is that of Probable 2-heptyl-3-hydroxy-4(1H)-quinolone synthase AqdB2 from Rhodococcus erythropolis (Arthrobacter picolinophilus).